The chain runs to 450 residues: Signal recognition particle 54 kDa protein (450 aa).

GTP contacts are provided by residues 107 to 114 (GIQGSGKT), 188 to 192 (DTAGR), and 247 to 250 (TKLD).

This sequence belongs to the GTP-binding SRP family. SRP54 subfamily. As to quaternary structure, part of the signal recognition particle protein translocation system, which is composed of SRP and FtsY. Archaeal SRP consists of a 7S RNA molecule of 300 nucleotides and two protein subunits: SRP54 and SRP19.

Its subcellular location is the cytoplasm. The enzyme catalyses GTP + H2O = GDP + phosphate + H(+). In terms of biological role, involved in targeting and insertion of nascent membrane proteins into the cytoplasmic membrane. Binds to the hydrophobic signal sequence of the ribosome-nascent chain (RNC) as it emerges from the ribosomes. The SRP-RNC complex is then targeted to the cytoplasmic membrane where it interacts with the SRP receptor FtsY. The polypeptide is Signal recognition particle 54 kDa protein (Methanococcus maripaludis (strain C5 / ATCC BAA-1333)).